Reading from the N-terminus, the 92-residue chain is Defensin-like protein 294 (92 aa).

Positions 1–26 (MASRATSLFIFFFLISCTFMLLETNA) are cleaved as a signal peptide. Disulfide bonds link cysteine 63-cysteine 82, cysteine 69-cysteine 87, and cysteine 75-cysteine 89.

Belongs to the DEFL family.

The protein resides in the secreted. This chain is Defensin-like protein 294, found in Arabidopsis thaliana (Mouse-ear cress).